Reading from the N-terminus, the 152-residue chain is Transcriptional regulator MraZ (152 aa).

SpoVT-AbrB domains are found at residues 5 to 52 (ASAI…PIHE) and 81 to 124 (AHEV…DEQA).

Belongs to the MraZ family. Forms oligomers.

It localises to the cytoplasm. The protein localises to the nucleoid. In Shewanella oneidensis (strain ATCC 700550 / JCM 31522 / CIP 106686 / LMG 19005 / NCIMB 14063 / MR-1), this protein is Transcriptional regulator MraZ.